The sequence spans 121 residues: Small ribosomal subunit protein uS13 (121 aa).

The interval 95-121 (GLPVRGQKTKTNARTRKGKRKTVGAKS) is disordered.

It belongs to the universal ribosomal protein uS13 family. As to quaternary structure, part of the 30S ribosomal subunit. Forms a loose heterodimer with protein S19. Forms two bridges to the 50S subunit in the 70S ribosome.

Located at the top of the head of the 30S subunit, it contacts several helices of the 16S rRNA. In the 70S ribosome it contacts the 23S rRNA (bridge B1a) and protein L5 of the 50S subunit (bridge B1b), connecting the 2 subunits; these bridges are implicated in subunit movement. Contacts the tRNAs in the A and P-sites. The polypeptide is Small ribosomal subunit protein uS13 (Campylobacter jejuni subsp. jejuni serotype O:6 (strain 81116 / NCTC 11828)).